A 250-amino-acid chain; its full sequence is DNA repair protein RecO (250 aa).

This sequence belongs to the RecO family.

Its function is as follows. Involved in DNA repair and RecF pathway recombination. The protein is DNA repair protein RecO of Lactobacillus acidophilus (strain ATCC 700396 / NCK56 / N2 / NCFM).